The following is a 1377-amino-acid chain: DNA-directed RNA polymerase subunit beta (1377 aa).

Belongs to the RNA polymerase beta chain family. As to quaternary structure, the RNAP catalytic core consists of 2 alpha, 1 beta, 1 beta' and 1 omega subunit. When a sigma factor is associated with the core the holoenzyme is formed, which can initiate transcription.

It carries out the reaction RNA(n) + a ribonucleoside 5'-triphosphate = RNA(n+1) + diphosphate. Functionally, DNA-dependent RNA polymerase catalyzes the transcription of DNA into RNA using the four ribonucleoside triphosphates as substrates. This chain is DNA-directed RNA polymerase subunit beta, found in Brucella canis (strain ATCC 23365 / NCTC 10854 / RM-666).